Here is a 155-residue protein sequence, read N- to C-terminus: UPF0461 protein C5orf24 homolog (155 aa).

Residues 60–69 are compositionally biased toward polar residues; that stretch reads NETHLQTSTS. The segment at 60–155 is disordered; the sequence is NETHLQTSTS…QQALMCSSDA (96 aa). Positions 78 to 92 are enriched in basic residues; it reads LKKKKNVGRSGKRGR. Over residues 94-107 the composition is skewed to polar residues; sequence SGTTKSAGYRTSTG.

The protein belongs to the UPF0461 family.

This Xenopus laevis (African clawed frog) protein is UPF0461 protein C5orf24 homolog.